The sequence spans 738 residues: METLGVQTNSELREELNRLKEENARLKKELNQHQVIVNNTLDAIFICDNEMRIVQANEATERMLQVDSEDLKKRSVLDFLFSIPKDELNLSVKKFFKKGFLWKEVPIRLDCGATKYIEFLAKRGIGEDFFFVVMRDISSKKILEREFSMNEQLFKDLFDRAVDGIVLFDKDGGFIDANLSFCKSFEINHNELSHLSLYEFIDSGSRKDFDNIWKALNRKGKAKGELPVKLRSGVQKLFEFTITSNIISGFYMSIMRDITEKRSMELQLFKSEERFREIFENAMDAIIIWSNDGRIVKANQSACKIFELPMNLLLKRKLCDFLVDSQQKYSITKRKYAKYGEIREELLFQMGNGQFKELEFTSKRTILENQHLTILRNVSDRKRMEKELRESELKFRKVFNGSMDGNVLFDNQYRIIDANPLASHILGLSHEEIKQHSLLDIISAYEIENLASPARQINFDEMDNEIPFLLSSGDNRKLEFSFKRNIIQNMNLAIFKDVTERKELEERLRKSDTLHVVGELAAGIAHEIRNPMTALKGFIQLLKGSVEGDYALYFNVITSELKRIESIITEFLILAKPQAIMYEEKHVTQIMRDTIDLLNAQANLSNVQMQLDLIDDIPPIYCEPNQLKQVFINILKNAIEVMPDGGNIFVTIKALDQDHVLISLKDEGIGMTEDKLKRLGEPFYTTKERGTGLGLMVSYKIIEEHQGEIMVESEEGKGTVFHITLPVRQNAEERRNDE.

PAS domains lie at 29–99 (ELNQ…FKKG), 150–220 (NEQL…NRKG), 271–342 (SEER…YGEI), and 391–462 (SELK…FDEM). The 207-residue stretch at 523–729 (GIAHEIRNPM…VFHITLPVRQ (207 aa)) folds into the Histidine kinase domain. At His-526 the chain carries Phosphohistidine; by autocatalysis.

The enzyme catalyses ATP + protein L-histidine = ADP + protein N-phospho-L-histidine.. In terms of biological role, phosphorylates the sporulation-regulatory protein spo0A under biofilm growth conditions. Also able to weakly phosphorylate spo0F. This Bacillus subtilis (strain 168) protein is Sporulation kinase E (kinE).